A 368-amino-acid chain; its full sequence is Probable dual-specificity RNA methyltransferase RlmN (368 aa).

The active-site Proton acceptor is the Glu111. A Radical SAM core domain is found at 117 to 355; that stretch reads YPNRATLCIS…CTVRDTRGQE (239 aa). A disulfide bridge connects residues Cys124 and Cys360. Positions 131, 135, and 138 each coordinate [4Fe-4S] cluster. S-adenosyl-L-methionine is bound by residues 181-182, Ser215, 238-240, and Asn317; these read GE and SLH. The active-site S-methylcysteine intermediate is the Cys360.

The protein belongs to the radical SAM superfamily. RlmN family. It depends on [4Fe-4S] cluster as a cofactor.

Its subcellular location is the cytoplasm. The enzyme catalyses adenosine(2503) in 23S rRNA + 2 reduced [2Fe-2S]-[ferredoxin] + 2 S-adenosyl-L-methionine = 2-methyladenosine(2503) in 23S rRNA + 5'-deoxyadenosine + L-methionine + 2 oxidized [2Fe-2S]-[ferredoxin] + S-adenosyl-L-homocysteine. It carries out the reaction adenosine(37) in tRNA + 2 reduced [2Fe-2S]-[ferredoxin] + 2 S-adenosyl-L-methionine = 2-methyladenosine(37) in tRNA + 5'-deoxyadenosine + L-methionine + 2 oxidized [2Fe-2S]-[ferredoxin] + S-adenosyl-L-homocysteine. Its function is as follows. Specifically methylates position 2 of adenine 2503 in 23S rRNA and position 2 of adenine 37 in tRNAs. The polypeptide is Probable dual-specificity RNA methyltransferase RlmN (Corynebacterium diphtheriae (strain ATCC 700971 / NCTC 13129 / Biotype gravis)).